Here is a 165-residue protein sequence, read N- to C-terminus: Chorismate pyruvate-lyase (165 aa).

4 residues coordinate substrate: M35, R77, L115, and E156.

Belongs to the UbiC family. In terms of assembly, monomer.

It is found in the cytoplasm. The enzyme catalyses chorismate = 4-hydroxybenzoate + pyruvate. It participates in cofactor biosynthesis; ubiquinone biosynthesis. Its function is as follows. Removes the pyruvyl group from chorismate, with concomitant aromatization of the ring, to provide 4-hydroxybenzoate (4HB) for the ubiquinone pathway. The polypeptide is Chorismate pyruvate-lyase (Enterobacter sp. (strain 638)).